The primary structure comprises 65 residues: Large ribosomal subunit protein bL35 (65 aa).

It belongs to the bacterial ribosomal protein bL35 family.

This is Large ribosomal subunit protein bL35 from Prochlorococcus marinus subsp. pastoris (strain CCMP1986 / NIES-2087 / MED4).